Here is a 528-residue protein sequence, read N- to C-terminus: Chaperonin GroEL, chloroplastic (528 aa).

Residues 29 to 32 (TLGP), 86 to 90 (DGTTT), Gly415, 481 to 483 (NAA), and Asp497 contribute to the ATP site.

The protein belongs to the chaperonin (HSP60) family. As to quaternary structure, forms a cylinder of 14 subunits composed of two heptameric rings stacked back-to-back. Interacts with the co-chaperonin GroES.

It is found in the plastid. The protein resides in the chloroplast. The enzyme catalyses ATP + H2O + a folded polypeptide = ADP + phosphate + an unfolded polypeptide.. In terms of biological role, together with its co-chaperonin GroES, plays an essential role in assisting protein folding. The GroEL-GroES system forms a nano-cage that allows encapsulation of the non-native substrate proteins and provides a physical environment optimized to promote and accelerate protein folding. The sequence is that of Chaperonin GroEL, chloroplastic from Trieres chinensis (Marine centric diatom).